Here is a 145-residue protein sequence, read N- to C-terminus: D-aminoacyl-tRNA deacylase (145 aa).

The Gly-cisPro motif, important for rejection of L-amino acids motif lies at 137 to 138; that stretch reads GP.

It belongs to the DTD family. As to quaternary structure, homodimer.

The protein resides in the cytoplasm. The enzyme catalyses glycyl-tRNA(Ala) + H2O = tRNA(Ala) + glycine + H(+). The catalysed reaction is a D-aminoacyl-tRNA + H2O = a tRNA + a D-alpha-amino acid + H(+). Its function is as follows. An aminoacyl-tRNA editing enzyme that deacylates mischarged D-aminoacyl-tRNAs. Also deacylates mischarged glycyl-tRNA(Ala), protecting cells against glycine mischarging by AlaRS. Acts via tRNA-based rather than protein-based catalysis; rejects L-amino acids rather than detecting D-amino acids in the active site. By recycling D-aminoacyl-tRNA to D-amino acids and free tRNA molecules, this enzyme counteracts the toxicity associated with the formation of D-aminoacyl-tRNA entities in vivo and helps enforce protein L-homochirality. The chain is D-aminoacyl-tRNA deacylase from Shewanella baltica (strain OS195).